The primary structure comprises 521 residues: Leucine-rich repeat-containing protein 24 (521 aa).

The N-terminal stretch at 1 to 23 is a signal peptide; the sequence is MALRAPTLLLLLLGLLLLPLLPG. The region spanning 24 to 58 is the LRRNT domain; the sequence is LPPRATGCPAACRCYSATVECGALRLRVVPPGIPP. LRR repeat units follow at residues 59–80, 83–104, 107–128, 131–152, 155–176, and 179–200; these read GTQT…SLAP, ALRH…AFRA, RLLE…AFVG, QLRV…TFLH, RLQE…ALAG, and SLAL…ALQP. Residue Asn91 is glycosylated (N-linked (GlcNAc...) asparagine). Positions 212–267 constitute an LRRCT domain; sequence NPWRCDCALHWLGSWIKEGGRRLLSSRDKKITCAEPPRLALQSLLEVSGGSLICIP. One can recognise an Ig-like C2-type domain in the interval 268–371; it reads PSVNVEPPEF…ARVPFHLLVN (104 aa). Residues Cys289 and Cys353 are joined by a disulfide bond. The interval 306–330 is disordered; the sequence is QPRDGKPQAQAQLEGGAPGLGGHGT. 2 N-linked (GlcNAc...) asparagine glycosylation sites follow: Asn342 and Asn371. The interval 374 to 395 is disordered; that stretch reads RQQSQQLPDPQAPATRPVGHEP. Residues 414–434 traverse the membrane as a helical segment; it reads AITAAIALLALTALLLAAMIC.

The protein resides in the membrane. The polypeptide is Leucine-rich repeat-containing protein 24 (Lrrc24) (Mus musculus (Mouse)).